Reading from the N-terminus, the 89-residue chain is Small ribosomal subunit protein uS15 (89 aa).

Belongs to the universal ribosomal protein uS15 family. As to quaternary structure, part of the 30S ribosomal subunit. Forms a bridge to the 50S subunit in the 70S ribosome, contacting the 23S rRNA.

In terms of biological role, one of the primary rRNA binding proteins, it binds directly to 16S rRNA where it helps nucleate assembly of the platform of the 30S subunit by binding and bridging several RNA helices of the 16S rRNA. Functionally, forms an intersubunit bridge (bridge B4) with the 23S rRNA of the 50S subunit in the ribosome. This is Small ribosomal subunit protein uS15 from Leifsonia xyli subsp. xyli (strain CTCB07).